The chain runs to 103 residues: Thrombin inhibitor rhodniin (103 aa).

Kazal-like domains follow at residues 1–50 (EGGE…PCEP) and 51–103 (DEDE…PCRT). 6 cysteine pairs are disulfide-bonded: cysteine 6/cysteine 31, cysteine 8/cysteine 27, cysteine 16/cysteine 48, cysteine 57/cysteine 84, cysteine 60/cysteine 80, and cysteine 69/cysteine 101.

It localises to the secreted. Its function is as follows. Thrombin-specific inhibitor. Appears to form 1:1 complexes with thrombin. Prevents blood clotting to allow the insect to feed on blood. This is Thrombin inhibitor rhodniin from Rhodnius prolixus (Triatomid bug).